Here is a 342-residue protein sequence, read N- to C-terminus: Pre-mRNA-splicing factor 18 (342 aa).

It belongs to the PRP18 family. Interacts with the spliceosome. Part of a complex containing U4/U6 snRNPs.

Its subcellular location is the nucleus speckle. Functionally, participates in the second step of pre-mRNA splicing. This Danio rerio (Zebrafish) protein is Pre-mRNA-splicing factor 18 (prpf18).